The sequence spans 474 residues: Glutamate--tRNA ligase (474 aa).

The 'HIGH' region motif lies at 9–19 (PSPTGYLHVGG). The 'KMSKS' region signature appears at 240 to 244 (KLSKR). Position 243 (K243) interacts with ATP.

The protein belongs to the class-I aminoacyl-tRNA synthetase family. Glutamate--tRNA ligase type 1 subfamily. In terms of assembly, monomer.

It localises to the cytoplasm. It carries out the reaction tRNA(Glu) + L-glutamate + ATP = L-glutamyl-tRNA(Glu) + AMP + diphosphate. Catalyzes the attachment of glutamate to tRNA(Glu) in a two-step reaction: glutamate is first activated by ATP to form Glu-AMP and then transferred to the acceptor end of tRNA(Glu). This Aliivibrio fischeri (strain ATCC 700601 / ES114) (Vibrio fischeri) protein is Glutamate--tRNA ligase.